The primary structure comprises 196 residues: Nucleoside triphosphate pyrophosphatase (196 aa).

Residue aspartate 72 is the Proton acceptor of the active site.

It belongs to the Maf family. A divalent metal cation serves as cofactor.

It localises to the cytoplasm. It catalyses the reaction a ribonucleoside 5'-triphosphate + H2O = a ribonucleoside 5'-phosphate + diphosphate + H(+). The enzyme catalyses a 2'-deoxyribonucleoside 5'-triphosphate + H2O = a 2'-deoxyribonucleoside 5'-phosphate + diphosphate + H(+). In terms of biological role, nucleoside triphosphate pyrophosphatase. May have a dual role in cell division arrest and in preventing the incorporation of modified nucleotides into cellular nucleic acids. This Chlamydia muridarum (strain MoPn / Nigg) protein is Nucleoside triphosphate pyrophosphatase.